Here is a 226-residue protein sequence, read N- to C-terminus: Cytochrome c biogenesis ATP-binding export protein CcmA (226 aa).

The region spanning 19–226 (LRANDLAFSR…LGGAHALPPA (208 aa)) is the ABC transporter domain. Residue 51-58 (GPNGSGKS) coordinates ATP.

The protein belongs to the ABC transporter superfamily. CcmA exporter (TC 3.A.1.107) family. As to quaternary structure, the complex is composed of two ATP-binding proteins (CcmA) and two transmembrane proteins (CcmB).

The protein localises to the cell inner membrane. The enzyme catalyses heme b(in) + ATP + H2O = heme b(out) + ADP + phosphate + H(+). In terms of biological role, part of the ABC transporter complex CcmAB involved in the biogenesis of c-type cytochromes; once thought to export heme, this seems not to be the case, but its exact role is uncertain. Responsible for energy coupling to the transport system. This chain is Cytochrome c biogenesis ATP-binding export protein CcmA, found in Cupriavidus pinatubonensis (strain JMP 134 / LMG 1197) (Cupriavidus necator (strain JMP 134)).